The following is a 66-amino-acid chain: Large ribosomal subunit protein bL35 (66 aa).

The tract at residues 20–40 (GKVKHAQRGKRHGMIKRTKKQ) is disordered.

This sequence belongs to the bacterial ribosomal protein bL35 family.

This is Large ribosomal subunit protein bL35 from Nitrobacter winogradskyi (strain ATCC 25391 / DSM 10237 / CIP 104748 / NCIMB 11846 / Nb-255).